The following is a 623-amino-acid chain: Vacuolar-sorting receptor 1 (623 aa).

Positions 1 to 22 are cleaved as a signal peptide; the sequence is MKCWRLSAILFLGFMLTSLSTA. Residues 23-564 lie on the Lumenal side of the membrane; it reads RFVVEKNSLS…SKTASQAKST (542 aa). The region spanning 54–163 is the PA domain; it reads QYGGSMAGNV…SFGEKLKDAI (110 aa). A glycan (N-linked (GlcNAc...) asparagine) is linked at asparagine 143. EGF-like domains follow at residues 411 to 461 and 464 to 511; these read ETNE…TTCE and GHGR…KNCE. Cystine bridges form between cysteine 415/cysteine 433, cysteine 422/cysteine 442, cysteine 444/cysteine 460, cysteine 468/cysteine 488, cysteine 475/cysteine 496, and cysteine 498/cysteine 510. Positions 512–554 constitute an EGF-like 3; calcium-binding domain; sequence DIDECKDKKACQCPECSCKNTWGSYNCSCSGDLLYIKDQDTCI. N-linked (GlcNAc...) asparagine glycosylation occurs at asparagine 537. Cysteines 540 and 553 form a disulfide. A helical transmembrane segment spans residues 565–585; it reads WAAFWVVLIALAMIAGGGFLV. Residues 586 to 623 lie on the Cytoplasmic side of the membrane; that stretch reads YKYRIRQYMDSEIRAIMAQYMPLDSQEEGPNHVNHQRG. The Tyrosine-based internalization motif signature appears at 605–608; sequence YMPL.

This sequence belongs to the VSR (BP-80) family. As to quaternary structure, interacts with the N-terminal propeptide of aleurein (proaleurein).

It localises to the membrane. It is found in the golgi apparatus membrane. The protein resides in the cytoplasmic vesicle. The protein localises to the clathrin-coated vesicle membrane. Its subcellular location is the prevacuolar compartment membrane. Its function is as follows. Vacuolar-sorting receptor (VSR) involved in clathrin-coated vesicles sorting from Golgi apparatus to vacuoles. Seems to binds preferentially proteins containing a N-terminal NPIR motif. The polypeptide is Vacuolar-sorting receptor 1 (BP80) (Pisum sativum (Garden pea)).